Reading from the N-terminus, the 111-residue chain is Large ribosomal subunit protein uL24 (111 aa).

It belongs to the universal ribosomal protein uL24 family. Part of the 50S ribosomal subunit.

One of two assembly initiator proteins, it binds directly to the 5'-end of the 23S rRNA, where it nucleates assembly of the 50S subunit. In terms of biological role, one of the proteins that surrounds the polypeptide exit tunnel on the outside of the subunit. The polypeptide is Large ribosomal subunit protein uL24 (Streptococcus pneumoniae (strain Hungary19A-6)).